The primary structure comprises 284 residues: MRYIGAHVSIAGGIENAPLRAQEIGATAFALFTKNQRQWKAPALTAKTIEAFRENCERCGYRPEHILPHDSYLINLGSPDAQKLDRSRNAFIDEMQRTEALGLVRLNLHPGSHLRESSEEACLETIAESVNLAHEATNTAVAVLENTAGQGSNLGHTFEQLAFIIQRVHDKSRVGVCLDTCHLFAAGYDLRTEEAVNGMFELFDASIGLHYLKGMHLNDAKPELDSRRDRHESIGKGKIGLDGFAAIIRHPASAEIPLILETPQPEIWSEEITLLRSFEEAQNC.

The Zn(2+) site is built by His69, His109, Glu145, Asp179, His182, His216, Asp229, His231, and Glu261.

This sequence belongs to the AP endonuclease 2 family. Zn(2+) serves as cofactor.

The enzyme catalyses Endonucleolytic cleavage to 5'-phosphooligonucleotide end-products.. Functionally, endonuclease IV plays a role in DNA repair. It cleaves phosphodiester bonds at apurinic or apyrimidinic (AP) sites, generating a 3'-hydroxyl group and a 5'-terminal sugar phosphate. This Chlorobium phaeobacteroides (strain BS1) protein is Probable endonuclease 4.